Reading from the N-terminus, the 452-residue chain is Neuromedin-K receptor (452 aa).

Topologically, residues 1–71 (MASVPTGENW…TNQFVQPSWR (71 aa)) are extracellular. N9, N23, N40, and N60 each carry an N-linked (GlcNAc...) asparagine glycan. Residues 72–94 (IALWSLAYGLVVAVAVFGNLIVI) traverse the membrane as a helical segment. The Cytoplasmic portion of the chain corresponds to 95–104 (WIILAHKRMR). A helical membrane pass occupies residues 105–126 (TVTNYFLVNLAFSDASVAAFNT). The Extracellular portion of the chain corresponds to 127–146 (LVNFIYGVHSEWYFGANYCR). C145 and C220 form a disulfide bridge. A helical membrane pass occupies residues 147–168 (FQNFFPITAVFASIYSMTAIAV). The Cytoplasmic portion of the chain corresponds to 169–188 (DRYMAIIDPLKPRLSATATK). Residues 189 to 209 (IVIGSIWILAFLLAFPQCLYS) traverse the membrane as a helical segment. The Extracellular segment spans residues 210 to 232 (KIKVMPGRTLCYVQWPEGPKQHF). The chain crosses the membrane as a helical span at residues 233–257 (TYHIIVIILVYCFPLLIMGVTYTIV). Residues 258-286 (GITLWGGEIPGDTCDKYHEQLKAKRKVVK) lie on the Cytoplasmic side of the membrane. A helical transmembrane segment spans residues 287–308 (MMIIVVVTFAICWLPYHVYFIL). Residues 309 to 321 (TAIYQQLNRWKYI) are Extracellular-facing. A helical transmembrane segment spans residues 322–346 (QQVYLASFWLAMSSTMYNPIIYCCL). At 347–452 (NKRFRAGFKR…SPYTSVDEYS (106 aa)) the chain is on the cytoplasmic side. A lipid anchor (S-palmitoyl cysteine) is attached at C361. Residues 401-452 (DPSEGDPAKSSRKKRAVPRDPSANGCSHREFKSASTTSSFISSPYTSVDEYS) form a disordered region. Residues 433–452 (SASTTSSFISSPYTSVDEYS) are compositionally biased toward low complexity.

Belongs to the G-protein coupled receptor 1 family. The anchoring of this receptor to the plasma membrane is probably mediated by the palmitoylation of a cysteine residue.

It is found in the cell membrane. This is a receptor for the tachykinin neuropeptide neuromedin-K (neurokinin B). It is associated with G proteins that activate a phosphatidylinositol-calcium second messenger system. In Mus musculus (Mouse), this protein is Neuromedin-K receptor (Tacr3).